Consider the following 459-residue polypeptide: Putrescine aminotransferase (459 aa).

Pyridoxal 5'-phosphate contacts are provided by residues Gly-150–Thr-151 and Gln-274. Lys-300 is modified (N6-(pyridoxal phosphate)lysine). Residue Thr-332 participates in pyridoxal 5'-phosphate binding.

Belongs to the class-III pyridoxal-phosphate-dependent aminotransferase family. Putrescine aminotransferase subfamily. Requires pyridoxal 5'-phosphate as cofactor.

The enzyme catalyses an alkane-alpha,omega-diamine + 2-oxoglutarate = an omega-aminoaldehyde + L-glutamate. The catalysed reaction is putrescine + 2-oxoglutarate = 1-pyrroline + L-glutamate + H2O. It catalyses the reaction cadaverine + 2-oxoglutarate = 5-aminopentanal + L-glutamate. Its pathway is amine and polyamine degradation; putrescine degradation; 4-aminobutanal from putrescine (transaminase route): step 1/1. Its function is as follows. Catalyzes the aminotransferase reaction from putrescine to 2-oxoglutarate, leading to glutamate and 4-aminobutanal, which spontaneously cyclizes to form 1-pyrroline. This is the first step in one of two pathways for putrescine degradation, where putrescine is converted into 4-aminobutanoate (gamma-aminobutyrate or GABA) via 4-aminobutanal. Also functions as a cadaverine transaminase in a a L-lysine degradation pathway to succinate that proceeds via cadaverine, glutarate and L-2-hydroxyglutarate. The sequence is that of Putrescine aminotransferase from Shigella boydii serotype 4 (strain Sb227).